A 288-amino-acid polypeptide reads, in one-letter code: Chemotaxis protein methyltransferase 2 (288 aa).

The 280-residue stretch at 1 to 280 folds into the CheR-type methyltransferase domain; sequence MNEIVITDTD…TGYYKPHKGK (280 aa). Residues N76, T78, R82, E119, D145, 200 to 201, and 219 to 220 contribute to the S-adenosyl-L-methionine site; these read NL and RN.

The catalysed reaction is L-glutamyl-[protein] + S-adenosyl-L-methionine = [protein]-L-glutamate 5-O-methyl ester + S-adenosyl-L-homocysteine. Its function is as follows. Methylation of the membrane-bound methyl-accepting chemotaxis proteins (MCP) to form gamma-glutamyl methyl ester residues in MCP. The sequence is that of Chemotaxis protein methyltransferase 2 (cheR2) from Vibrio cholerae serotype O1 (strain ATCC 39315 / El Tor Inaba N16961).